The sequence spans 1929 residues: Intraflagellar transport protein 140 (1929 aa).

WD repeat units lie at residues 76–116 and 119–158; these read QVQV…PSYK and LHQE…YSFE. Positions 774–795 are disordered; it reads LSTPDTGSPAVEAEESPQRQTR. 3 LRR repeats span residues 957-980, 1019-1044, and 1510-1532; these read STSL…TFTK, ISLL…SLAE, and AQSL…LADI.

It is found in the cell projection. Its subcellular location is the cilium. The protein resides in the flagellum. The protein localises to the cytoplasm. It localises to the cytoskeleton. It is found in the flagellum axoneme. Its subcellular location is the flagellum basal body. In terms of biological role, component of the intraflagellar transport complex A (IFT-A) involved in flagellar assembly. In Giardia intestinalis (strain ATCC 50803 / WB clone C6) (Giardia lamblia), this protein is Intraflagellar transport protein 140.